Reading from the N-terminus, the 224-residue chain is Putative carbamate hydrolase RutD (224 aa).

The AB hydrolase-1 domain occupies 14–115; the sequence is PVVVLISGLG…TVLVSVNGWL (102 aa).

Belongs to the AB hydrolase superfamily. Hydrolase RutD family.

The enzyme catalyses carbamate + 2 H(+) = NH4(+) + CO2. In terms of biological role, involved in pyrimidine catabolism. May facilitate the hydrolysis of carbamate, a reaction that can also occur spontaneously. This chain is Putative carbamate hydrolase RutD, found in Shigella dysenteriae serotype 1 (strain Sd197).